The sequence spans 209 residues: Thiamine-phosphate synthase (209 aa).

4-amino-2-methyl-5-(diphosphooxymethyl)pyrimidine contacts are provided by residues 41-45 (QYRNK) and N73. Residues D74 and D93 each contribute to the Mg(2+) site. 4-amino-2-methyl-5-(diphosphooxymethyl)pyrimidine is bound at residue S112. 139 to 141 (SST) serves as a coordination point for 2-[(2R,5Z)-2-carboxy-4-methylthiazol-5(2H)-ylidene]ethyl phosphate. Position 142 (K142) interacts with 4-amino-2-methyl-5-(diphosphooxymethyl)pyrimidine. Position 168 (G168) interacts with 2-[(2R,5Z)-2-carboxy-4-methylthiazol-5(2H)-ylidene]ethyl phosphate.

This sequence belongs to the thiamine-phosphate synthase family. Mg(2+) serves as cofactor.

The catalysed reaction is 2-[(2R,5Z)-2-carboxy-4-methylthiazol-5(2H)-ylidene]ethyl phosphate + 4-amino-2-methyl-5-(diphosphooxymethyl)pyrimidine + 2 H(+) = thiamine phosphate + CO2 + diphosphate. It carries out the reaction 2-(2-carboxy-4-methylthiazol-5-yl)ethyl phosphate + 4-amino-2-methyl-5-(diphosphooxymethyl)pyrimidine + 2 H(+) = thiamine phosphate + CO2 + diphosphate. It catalyses the reaction 4-methyl-5-(2-phosphooxyethyl)-thiazole + 4-amino-2-methyl-5-(diphosphooxymethyl)pyrimidine + H(+) = thiamine phosphate + diphosphate. Its pathway is cofactor biosynthesis; thiamine diphosphate biosynthesis; thiamine phosphate from 4-amino-2-methyl-5-diphosphomethylpyrimidine and 4-methyl-5-(2-phosphoethyl)-thiazole: step 1/1. Condenses 4-methyl-5-(beta-hydroxyethyl)thiazole monophosphate (THZ-P) and 2-methyl-4-amino-5-hydroxymethyl pyrimidine pyrophosphate (HMP-PP) to form thiamine monophosphate (TMP). This is Thiamine-phosphate synthase from Methylobacillus flagellatus (strain ATCC 51484 / DSM 6875 / VKM B-1610 / KT).